Here is a 147-residue protein sequence, read N- to C-terminus: 3-dehydroquinate dehydratase (147 aa).

Tyrosine 22 (proton acceptor) is an active-site residue. Substrate-binding residues include asparagine 73, histidine 79, and aspartate 86. Catalysis depends on histidine 99, which acts as the Proton donor. Substrate-binding positions include 100–101 (LS) and arginine 110.

Belongs to the type-II 3-dehydroquinase family. In terms of assembly, homododecamer.

It carries out the reaction 3-dehydroquinate = 3-dehydroshikimate + H2O. Its pathway is metabolic intermediate biosynthesis; chorismate biosynthesis; chorismate from D-erythrose 4-phosphate and phosphoenolpyruvate: step 3/7. In terms of biological role, catalyzes a trans-dehydration via an enolate intermediate. The sequence is that of 3-dehydroquinate dehydratase from Synechococcus sp. (strain WH7803).